Consider the following 156-residue polypeptide: Cellulose synthase operon protein D (156 aa).

It functions in the pathway glycan metabolism; bacterial cellulose biosynthesis. In terms of biological role, may have a major role in the perfection of crystallization, involved either in the pore structure itself or in the organization of the pores within the linear array of terminal synthesizing complexes (TCs). In Komagataeibacter xylinus (Gluconacetobacter xylinus), this protein is Cellulose synthase operon protein D.